We begin with the raw amino-acid sequence, 359 residues long: Phospho-N-acetylmuramoyl-pentapeptide-transferase (359 aa).

10 consecutive transmembrane segments (helical) span residues 3-23, 55-75, 80-100, 117-137, 156-176, 187-207, 231-251, 255-275, 280-300, and 334-354; these read LILI…PALI, VAIL…GMAM, PSAS…VGFI, TAKT…ALQF, IATV…VVSA, LDGL…LITF, LALV…WNAA, IFMG…ISVT, ILAV…VVQI, and FWLL…GEWL.

It belongs to the glycosyltransferase 4 family. MraY subfamily. Mg(2+) serves as cofactor.

The protein localises to the cell membrane. It carries out the reaction UDP-N-acetyl-alpha-D-muramoyl-L-alanyl-gamma-D-glutamyl-meso-2,6-diaminopimeloyl-D-alanyl-D-alanine + di-trans,octa-cis-undecaprenyl phosphate = di-trans,octa-cis-undecaprenyl diphospho-N-acetyl-alpha-D-muramoyl-L-alanyl-D-glutamyl-meso-2,6-diaminopimeloyl-D-alanyl-D-alanine + UMP. Its pathway is cell wall biogenesis; peptidoglycan biosynthesis. Functionally, catalyzes the initial step of the lipid cycle reactions in the biosynthesis of the cell wall peptidoglycan: transfers peptidoglycan precursor phospho-MurNAc-pentapeptide from UDP-MurNAc-pentapeptide onto the lipid carrier undecaprenyl phosphate, yielding undecaprenyl-pyrophosphoryl-MurNAc-pentapeptide, known as lipid I. The chain is Phospho-N-acetylmuramoyl-pentapeptide-transferase from Mycolicibacterium smegmatis (strain ATCC 700084 / mc(2)155) (Mycobacterium smegmatis).